Here is a 208-residue protein sequence, read N- to C-terminus: Uracil phosphoribosyltransferase (208 aa).

5-phospho-alpha-D-ribose 1-diphosphate contacts are provided by residues Arg-78, Arg-103, and 130-138 (DPMLATGGS). Uracil-binding positions include Ile-193 and 198 to 200 (GDA). Asp-199 provides a ligand contact to 5-phospho-alpha-D-ribose 1-diphosphate.

Belongs to the UPRTase family. Mg(2+) is required as a cofactor.

The enzyme catalyses UMP + diphosphate = 5-phospho-alpha-D-ribose 1-diphosphate + uracil. The protein operates within pyrimidine metabolism; UMP biosynthesis via salvage pathway; UMP from uracil: step 1/1. With respect to regulation, allosterically activated by GTP. Functionally, catalyzes the conversion of uracil and 5-phospho-alpha-D-ribose 1-diphosphate (PRPP) to UMP and diphosphate. The protein is Uracil phosphoribosyltransferase of Yersinia pestis.